The following is a 393-amino-acid chain: Prokineticin receptor 1 (393 aa).

Residues 1-63 (MEITMGVMDE…NSRTFFAAKI (63 aa)) are Extracellular-facing. Residues Asn-11, Asn-14, and Asn-36 are each glycosylated (N-linked (GlcNAc...) asparagine). A helical membrane pass occupies residues 64–84 (VIGMALVGIMLVCGIGNFIFI). Residues 85-98 (AALARYKKLRNLTN) lie on the Cytoplasmic side of the membrane. Residues 99 to 119 (LLIANLAISDFLVAIVCCPFE) form a helical membrane-spanning segment. Residues 120–145 (MDYYVVRQLSWEHGHVLCASVNYLRT) lie on the Extracellular side of the membrane. Cys-137 and Cys-217 form a disulfide bridge. The chain crosses the membrane as a helical span at residues 146–166 (VSLYVSTNALLAIAIDRYLAI). Residues 167–179 (VHPLRPRMKYQTA) are Cytoplasmic-facing. The helical transmembrane segment at 180–200 (TGLIALVWVVSILVAIPSAYF) threads the bilayer. The Extracellular segment spans residues 201 to 232 (TTETVLVIVKSQEKIFCGQIWPVDQQIYYKSY). The helical transmembrane segment at 233-253 (FLFIFGIEFVGPVVTMTLCYA) threads the bilayer. Topologically, residues 254-282 (RISRELWFKAVPGFQTEQIRKRLRCRRKT) are cytoplasmic. The helical transmembrane segment at 283–303 (VLVLMCILTAYVLCWAPFYGF) threads the bilayer. The Extracellular portion of the chain corresponds to 304–322 (AIVRDFFPTVFVKEKHYLT). Residues 323-343 (AFYVVECIAMSNSMINTVCFV) traverse the membrane as a helical segment. At 344–393 (TVKNNTIKYFKKIMLLHWKASYNGSKSSGDLDLKTTGVPATEEVDCIGLK) the chain is on the cytoplasmic side.

Belongs to the G-protein coupled receptor 1 family.

Its subcellular location is the cell membrane. Functionally, receptor for prokineticin 1. Exclusively coupled to the G(q) subclass of heteromeric G proteins. Activation leads to mobilization of calcium, stimulation of phosphoinositide turnover and activation of p44/p42 mitogen-activated protein kinase. May play a role during early pregnancy. The protein is Prokineticin receptor 1 (PROKR1) of Bos taurus (Bovine).